Reading from the N-terminus, the 597-residue chain is 66 kDa protein (597 aa).

Disordered regions lie at residues 62–82 (VRLQ…PSLQ), 160–198 (HSVP…FRQH), 218–315 (NQLA…SCRV), 329–411 (HFKS…LHHD), and 535–586 (SSPQ…ASAL). Polar residues predominate over residues 64-80 (LQSSPPRGPQSDRNLPS). Residues 218–234 (NQLAQAQQHPLPSSKPL) are compositionally biased toward polar residues. Residues 273-291 (PSSRGHLPSSTSSSSPRSN) show a composition bias toward low complexity. The span at 305 to 315 (SNSQDLRSCRV) shows a compositional bias: polar residues. Residues 389–400 (QTHHARLPHSKR) are compositionally biased toward basic residues. The segment covering 535–574 (SSPQSHSSESLRGDSPPSSHLPSSPSSACSGDSFASCSSF) has biased composition (low complexity). Polar residues predominate over residues 575-584 (GPSNPTSSAS).

The protein belongs to the tymoviridae protein p69 family.

This chain is 66 kDa protein, found in Ononis.